The primary structure comprises 495 residues: Probable cytosol aminopeptidase (495 aa).

Mn(2+) is bound by residues Lys-266 and Asp-271. Residue Lys-278 is part of the active site. The Mn(2+) site is built by Asp-289, Asp-348, and Glu-350. Arg-352 is an active-site residue.

This sequence belongs to the peptidase M17 family. Mn(2+) serves as cofactor.

The protein localises to the cytoplasm. The enzyme catalyses Release of an N-terminal amino acid, Xaa-|-Yaa-, in which Xaa is preferably Leu, but may be other amino acids including Pro although not Arg or Lys, and Yaa may be Pro. Amino acid amides and methyl esters are also readily hydrolyzed, but rates on arylamides are exceedingly low.. It carries out the reaction Release of an N-terminal amino acid, preferentially leucine, but not glutamic or aspartic acids.. Presumably involved in the processing and regular turnover of intracellular proteins. Catalyzes the removal of unsubstituted N-terminal amino acids from various peptides. This chain is Probable cytosol aminopeptidase, found in Pseudomonas paraeruginosa (strain DSM 24068 / PA7) (Pseudomonas aeruginosa (strain PA7)).